We begin with the raw amino-acid sequence, 454 residues long: Serine/arginine (SR)-type shuttling mRNA binding protein HRB1 (454 aa).

The interval 1–141 (MSDQERGSEN…SSGARGDYGP (141 aa)) is disordered. A compositionally biased stretch (basic residues) spans 14–24 (SRSRSRSPVRR). Basic and acidic residues-rich tracts occupy residues 25 to 38 (RMSD…DNHL) and 50 to 113 (KFAD…DYPR). Arg-127 carries the post-translational modification Omega-N-methylarginine. RRM domains follow at residues 161 to 237 (NSIF…QDNP) and 261 to 338 (HEVI…SKES). Phosphoserine is present on residues Ser-338, Ser-343, and Ser-355. In terms of domain architecture, RRM 3 spans 376–453 (RLIYCSNLPF…CDLDISYAKR (78 aa)).

Methylated by HMT1.

The protein resides in the cytoplasm. It is found in the nucleus. The protein localises to the P-body. It localises to the stress granule. In terms of biological role, binds to intron-containing transcripts and is involved in quality control for the export of spliced mRNAs from the nucleus. Binds to pre-mRNAs until splicing is completed or until faulty mRNAs are degraded. On correctly spliced mRNAs, GBP2 and HRB1 recruit MEX67 to allow nuclear export. On faulty mRNAs, GBP2 and HRB1 associate with the TRAMP complex that guides those pre-mRNAs to the exosome for degradation. This is Serine/arginine (SR)-type shuttling mRNA binding protein HRB1 from Saccharomyces cerevisiae (strain ATCC 204508 / S288c) (Baker's yeast).